Here is a 75-residue protein sequence, read N- to C-terminus: Protein Tlp homolog (75 aa).

The segment at 53-75 (REALDGMREEIKDEARDKKNGYM) is disordered.

The protein belongs to the Tlp family.

This chain is Protein Tlp homolog, found in Clostridium botulinum (strain Langeland / NCTC 10281 / Type F).